The primary structure comprises 749 residues: Meiotically up-regulated gene 122 protein (749 aa).

The Cytoplasmic segment spans residues 1–20 (MYRKWDLCITRHLLPYIEHS). The chain crosses the membrane as a helical; Signal-anchor for type II membrane protein span at residues 21–41 (VIPIIALLVLSLIFYILYICF). At 42–749 (GTTSYILSGI…LLSNALRSII (708 aa)) the chain is on the lumenal side. The PXA domain maps to 88-261 (PPELEAPLQL…CIILYFSSSE (174 aa)). In terms of domain architecture, PX spans 311 to 422 (LHYQFLKEAS…KFFAKSMRSH (112 aa)). Disordered regions lie at residues 439–489 (QSSS…LSQQ) and 504–546 (GSCT…PPKP). Polar residues-rich tracts occupy residues 440–461 (SSSV…NKTS) and 475–489 (LSHQ…LSQQ).

The protein belongs to the sorting nexin family.

The protein localises to the endoplasmic reticulum membrane. Functionally, has a role in meiosis. The protein is Meiotically up-regulated gene 122 protein (mug122) of Schizosaccharomyces pombe (strain 972 / ATCC 24843) (Fission yeast).